The sequence spans 111 residues: ATP-dependent Clp protease adapter protein ClpS (111 aa).

This sequence belongs to the ClpS family. Binds to the N-terminal domain of the chaperone ClpA.

Its function is as follows. Involved in the modulation of the specificity of the ClpAP-mediated ATP-dependent protein degradation. The sequence is that of ATP-dependent Clp protease adapter protein ClpS from Legionella pneumophila (strain Paris).